Reading from the N-terminus, the 106-residue chain is Urease subunit beta (106 aa).

Belongs to the urease beta subunit family. In terms of assembly, heterotrimer of UreA (gamma), UreB (beta) and UreC (alpha) subunits. Three heterotrimers associate to form the active enzyme.

It localises to the cytoplasm. The enzyme catalyses urea + 2 H2O + H(+) = hydrogencarbonate + 2 NH4(+). Its pathway is nitrogen metabolism; urea degradation; CO(2) and NH(3) from urea (urease route): step 1/1. The sequence is that of Urease subunit beta from Synechococcus sp. (strain CC9311).